The following is a 245-amino-acid chain: Transcription factor FUP7 (245 aa).

A DNA-binding region (zn(2)-C6 fungal-type) is located at residues 10-37 (CKTCRSRKQKCDGIRPACSRCRSLGLQC). A disordered region spans residues 162–216 (ESSSGNADYQHEDEVQSPAGAGDDMAVGDPYRDDSVDQDSIGQPPQRTESVGNMQ). The segment covering 199–214 (QDSIGQPPQRTESVGN) has biased composition (polar residues).

The protein resides in the nucleus. Transcription factor; part of the gene cluster that mediates the biosynthesis of the mycotoxin fusaproliferin (FUP) that belongs to the class of bicyclic sesterterpenoids. This chain is Transcription factor FUP7, found in Fusarium proliferatum (strain ET1) (Orchid endophyte fungus).